The chain runs to 1465 residues: Protein clueless (1465 aa).

The interval M1–A87 is disordered. Residues H30–A51 are compositionally biased toward low complexity. Residues T52 to N61 are compositionally biased toward basic residues. Phosphoserine is present on S273. The Clu domain maps to R427 to L669. Basic and acidic residues predominate over residues A742–K767. 2 disordered regions span residues A742 to A776 and V962 to D1021. Residues K970–K986 show a composition bias toward basic residues. Composition is skewed to low complexity over residues A987 to A1003 and A1010 to S1020. TPR repeat units lie at residues A1114–V1147, A1240–Y1273, and G1275–T1308. The segment at N1428–S1465 is disordered. A compositionally biased stretch (polar residues) spans G1447–S1465.

The protein belongs to the CLU family.

The protein resides in the cytoplasm. Its function is as follows. mRNA-binding protein involved in proper cytoplasmic distribution of mitochondria. This chain is Protein clueless, found in Drosophila virilis (Fruit fly).